A 1562-amino-acid polypeptide reads, in one-letter code: Cell wall protein RBR3 (1562 aa).

The N-terminal stretch at 1–20 (MIIFRKSFFTFWLLLNSVLA) is a signal peptide. N-linked (GlcNAc...) asparagine glycosylation is present at N190. The segment covering 338–353 (APGTNPTEYTTTITTT) has biased composition (low complexity). The segment at 338–366 (APGTNPTEYTTTITTTNSAGKPLTETGVV) is disordered. Residue N373 is glycosylated (N-linked (GlcNAc...) asparagine). 2 stretches are compositionally biased toward low complexity: residues 383 to 415 (FPTSSSSSSSSSTVSSTAPSSSSTKPSSSSQPS) and 422 to 729 (SSSK…ISAT). 3 disordered regions span residues 383–729 (FPTS…ISAT), 1404–1424 (GSGSDSGSGSGSGSGSGSSSN), and 1455–1486 (YSSGGSGNGVLPSGANNVGSNQTPTVSGGNSN). 3 N-linked (GlcNAc...) asparagine glycosylation sites follow: N602, N679, and N705. The segment covering 1407–1419 (SDSGSGSGSGSGS) has biased composition (gly residues). Residues 1468-1486 (GANNVGSNQTPTVSGGNSN) are compositionally biased toward polar residues. The GPI-anchor amidated asparagine moiety is linked to residue N1538. Residues 1539-1562 (SGSKFSVGKSAFIAIILTTFIGFI) constitute a propeptide, removed in mature form.

This sequence belongs to the HYR1/IFF family. Post-translationally, the GPI-anchor is attached to the protein in the endoplasmic reticulum and serves to target the protein to the cell surface. There, the glucosamine-inositol phospholipid moiety is cleaved off and the GPI-modified mannoprotein is covalently attached via its lipidless GPI glycan remnant to the 1,6-beta-glucan of the outer cell wall layer.

Its subcellular location is the secreted. The protein localises to the cell wall. It localises to the membrane. Functionally, GPI-anchored cell wall protein involved in cell wall organization, hyphal growth, as well as in host-fungal interaction and virulence. The chain is Cell wall protein RBR3 (RBR3) from Candida albicans (strain SC5314 / ATCC MYA-2876) (Yeast).